We begin with the raw amino-acid sequence, 456 residues long: Protein disulfide-isomerase TMX3 (456 aa).

The first 29 residues, 1–29 (MANAVGRRSWAALRLCAAVILLDLAVCKG), serve as a signal peptide directing secretion. One can recognise a Thioredoxin domain in the interval 30 to 131 (FVEDLNESFK…KDDIIEFAHR (102 aa)). The Lumenal segment spans residues 30-378 (FVEDLNESFK…TIVSIFKSSP (349 aa)). N-linked (GlcNAc...) asparagine glycosylation occurs at Asn-35. Active-site nucleophile residues include Cys-56 and Cys-59. Cys-56 and Cys-59 are oxidised to a cystine. 2 N-linked (GlcNAc...) asparagine glycosylation sites follow: Asn-261 and Asn-316. Residues 379–399 (LMGCFLFGLPLGVISIMCYGI) traverse the membrane as a helical segment. The Cytoplasmic segment spans residues 400-456 (YTADTDGGYIEERYEVSKSEMENQEQIEESKEQESSSGGSLAPTVQEPKDVLEKKKD). Residues 416 to 456 (SKSEMENQEQIEESKEQESSSGGSLAPTVQEPKDVLEKKKD) are disordered. Residues 446–456 (EPKDVLEKKKD) are compositionally biased toward basic and acidic residues. The short motif at 453–456 (KKKD) is the Di-lysine motif element.

This sequence belongs to the protein disulfide isomerase family.

It is found in the endoplasmic reticulum membrane. The catalysed reaction is Catalyzes the rearrangement of -S-S- bonds in proteins.. Functionally, probable disulfide isomerase, which participates in the folding of proteins containing disulfide bonds. May act as a dithiol oxidase. Acts as a regulator of endoplasmic reticulum-mitochondria contact sites via its ability to regulate redox signals. The protein is Protein disulfide-isomerase TMX3 (Tmx3) of Mus musculus (Mouse).